We begin with the raw amino-acid sequence, 327 residues long: MAWWKAWIEQEGVTVKSSSHFNPDPDAETLYKAMKGIGTNEQAIIDVLTKRSNTQRQQIAKSFKAQFGKDLTETLKSELSGKFERLIVALMYPPYRYEAKELHDAMKGLGTKEGVIIEILASRTKNQLREIMKAYEEDYGSSLEEDIQADTSGYLERILVCLLQGSRDDVSSFVDPALALQDAQDLYAAGEKIRGTDEMKFITILCTRSATHLLRVFEEYEKIANKSIEDSIKSETHGSLEEAMLTVVKCTQNLHSYFAERLYYAMKGAGTRDGTLIRNIVSRSEIDLNLIKCHFKKMYGKTLSSMIMEDTSGDYKNALLSLVGSDP.

Annexin repeat units follow at residues 21 to 92 (FNPD…ALMY), 93 to 164 (PPYR…CLLQ), 177 to 249 (ALAL…TVVK), and 253 to 324 (NLHS…SLVG). Positions 266, 268, 270, and 310 each coordinate Ca(2+).

The protein belongs to the annexin family.

In Homo sapiens (Human), this protein is Annexin A8-like protein 1.